The chain runs to 343 residues: Phosphoribosylformylglycinamidine cyclo-ligase (343 aa).

This sequence belongs to the AIR synthase family.

The protein localises to the cytoplasm. It carries out the reaction 2-formamido-N(1)-(5-O-phospho-beta-D-ribosyl)acetamidine + ATP = 5-amino-1-(5-phospho-beta-D-ribosyl)imidazole + ADP + phosphate + H(+). It functions in the pathway purine metabolism; IMP biosynthesis via de novo pathway; 5-amino-1-(5-phospho-D-ribosyl)imidazole from N(2)-formyl-N(1)-(5-phospho-D-ribosyl)glycinamide: step 2/2. The sequence is that of Phosphoribosylformylglycinamidine cyclo-ligase from Parasynechococcus marenigrum (strain WH8102).